The chain runs to 400 residues: uncharacterized protein (400 aa).

The TR mART core domain occupies 161-380 (NDLLNIIDIV…YVVKVIVMRL (220 aa)).

This is an uncharacterized protein from Acanthamoeba polyphaga (Amoeba).